Consider the following 662-residue polypeptide: Protein Aster-C (662 aa).

Residues 1–33 (MEGALTARQIVNEGDSSLATELQEEPEESPGPV) are disordered. The region spanning 70–176 (EYRQQFTHLP…LIIFRLWQNV (107 aa)) is the GRAM domain. The tract at residues 212–294 (VEENVQPRSP…EKRISRAPSK (83 aa)) is disordered. Over residues 240–250 (VSFTQESVSRA) the composition is skewed to polar residues. Residues 265–276 (LGKEDSQSERNV) show a composition bias toward basic and acidic residues. The VASt domain occupies 326-497 (QGRLYINRVF…DLLMEESVLS (172 aa)). A disordered region spans residues 506 to 530 (HSSLRRRRRTLNRTAEPVPKLSSQR). Residues 507–516 (SSLRRRRRTL) are compositionally biased toward basic residues. The chain crosses the membrane as a helical span at residues 557-577 (LIVVMSIFLLLLVLLNVTLFL).

As to expression, highly expressed in the liver. Also found in the testis.

The protein localises to the endoplasmic reticulum membrane. It is found in the cell membrane. Its function is as follows. Cholesterol transporter that mediates non-vesicular transport of cholesterol from the plasma membrane (PM) to the endoplasmic reticulum (ER). Contains unique domains for binding cholesterol and the PM, thereby serving as a molecular bridge for the transfer of cholesterol from the PM to the ER. Plays a crucial role in cholesterol homeostasis and has the unique ability to localize to the PM based on the level of membrane cholesterol. In lipid-poor conditions localizes to the ER membrane and in response to excess cholesterol in the PM is recruited to the endoplasmic reticulum-plasma membrane contact sites (EPCS) which is mediated by the GRAM domain. At the EPCS, the sterol-binding VASt/ASTER domain binds to the cholesterol in the PM and facilitates its transfer from the PM to ER. The chain is Protein Aster-C (Gramd1c) from Mus musculus (Mouse).